Here is a 213-residue protein sequence, read N- to C-terminus: Methylthioribulose-1-phosphate dehydratase (213 aa).

Residues His-104 and His-106 each contribute to the Zn(2+) site.

This sequence belongs to the aldolase class II family. MtnB subfamily. Zn(2+) serves as cofactor.

The enzyme catalyses 5-(methylsulfanyl)-D-ribulose 1-phosphate = 5-methylsulfanyl-2,3-dioxopentyl phosphate + H2O. Its pathway is amino-acid biosynthesis; L-methionine biosynthesis via salvage pathway; L-methionine from S-methyl-5-thio-alpha-D-ribose 1-phosphate: step 2/6. Catalyzes the dehydration of methylthioribulose-1-phosphate (MTRu-1-P) into 2,3-diketo-5-methylthiopentyl-1-phosphate (DK-MTP-1-P). The sequence is that of Methylthioribulose-1-phosphate dehydratase from Stenotrophomonas maltophilia (strain K279a).